Reading from the N-terminus, the 514-residue chain is Peptide chain release factor 3 (514 aa).

The tr-type G domain maps to 8–268 (KKRRTFAIIS…IFLKFAPEPH (261 aa)). GTP-binding positions include 17–24 (SHPDAGKT), 85–89 (DTPGH), and 139–142 (NKLD).

This sequence belongs to the TRAFAC class translation factor GTPase superfamily. Classic translation factor GTPase family. PrfC subfamily.

The protein resides in the cytoplasm. In terms of biological role, increases the formation of ribosomal termination complexes and stimulates activities of RF-1 and RF-2. It binds guanine nucleotides and has strong preference for UGA stop codons. It may interact directly with the ribosome. The stimulation of RF-1 and RF-2 is significantly reduced by GTP and GDP, but not by GMP. The sequence is that of Peptide chain release factor 3 from Streptococcus pneumoniae serotype 2 (strain D39 / NCTC 7466).